We begin with the raw amino-acid sequence, 200 residues long: Male-specific histamine-binding salivary protein (200 aa).

The N-terminal stretch at 1-18 (MKVLLLVLGAALCQNADA) is a signal peptide. Residues S37, D41, D56, and W59 each coordinate histamine. Disulfide bonds link C65–C193 and C137–C169. An N-linked (GlcNAc...) asparagine glycan is attached at N79. 6 residues coordinate histamine: E97, Y115, F125, D138, E154, and W156.

Belongs to the calycin superfamily. Histamine-binding salivary protein family. Homodimer; disulcde-linked. Post-translationally, N-glycosylated. Expressed in salivary glands.

It localises to the secreted. Its function is as follows. Salivary tick protein that acts by scavenging histamine at the wound site, outcompeting histamine receptors for histamine, thereby overcoming host inflammatory responses. Binds histamine with a high-affinity (Kd=1.2 nM). Contains two binding histamine sites (H and L), that appear to bind histamine with differing affinities. This is Male-specific histamine-binding salivary protein from Rhipicephalus appendiculatus (Brown ear tick).